A 1692-amino-acid chain; its full sequence is Flagellar attachment zone protein 1 (1692 aa).

Coiled-coil stretches lie at residues 613 to 657 (REQE…KLQK), 684 to 864 (VTLD…HKVR), and 903 to 1607 (NDHM…SALE). 37 repeat units span residues 1012-1025 (EELE…EKLA), 1026-1039 (EELE…EKLA), 1040-1053 (EELE…EKLA), 1054-1067 (EELE…EKLA), 1068-1081 (EELE…EKLA), 1082-1095 (EELE…EKLA), 1096-1109 (EELE…EKLA), 1110-1123 (EELE…EKLA), 1124-1137 (EELE…EKLA), 1138-1151 (EELE…EKLA), 1152-1165 (EELE…EKLA), 1166-1179 (EELE…EKLA), 1180-1193 (EELE…EKLA), 1194-1207 (EELE…EKLA), 1208-1221 (EELE…EKLA), 1222-1235 (EELE…EKLA), 1236-1249 (EELE…EKLA), 1250-1263 (EELE…EKLA), 1264-1277 (EELE…EKLA), 1278-1291 (EELE…EKLA), 1292-1305 (EELE…EKLA), 1306-1319 (EELE…EKLA), 1320-1333 (EELE…EKLA), 1334-1347 (EELE…EKLA), 1348-1361 (EELE…EKLA), 1362-1375 (EELE…EKLA), 1376-1389 (EELE…EKLA), 1390-1403 (EELE…EKLA), 1404-1417 (EELE…EKLA), 1418-1431 (EELE…EKLA), 1432-1445 (EELE…EKLA), 1446-1459 (EELE…EKLA), 1460-1473 (EELE…EKLA), 1474-1487 (EELE…EKLA), 1488-1501 (EELE…EKLA), 1502-1515 (EELE…EKLA), and 1516-1529 (EELE…KRLA). The interval 1012 to 1529 (EELELKAAEN…LKVAENKRLA (518 aa)) is 37 X 14 AA tandem repeats of E-E-L-E-L-K-[VA]-A-E-N-E-K-L-A.

It localises to the cell projection. The protein resides in the cilium. Its subcellular location is the flagellum. Its function is as follows. A component of FAZ filament that is required for correct FAZ assembly and attachment. Not essential for new flagellum growth. This chain is Flagellar attachment zone protein 1, found in Trypanosoma brucei brucei (strain 927/4 GUTat10.1).